Consider the following 343-residue polypeptide: tRNA N6-adenosine threonylcarbamoyltransferase (343 aa).

His-120 and His-124 together coordinate Fe cation. Substrate is bound by residues 142 to 146, Asp-175, Gly-188, Asp-192, and Asn-281; that span reads VVSGG. Asp-310 serves as a coordination point for Fe cation.

Belongs to the KAE1 / TsaD family. Fe(2+) serves as cofactor.

It localises to the cytoplasm. It catalyses the reaction L-threonylcarbamoyladenylate + adenosine(37) in tRNA = N(6)-L-threonylcarbamoyladenosine(37) in tRNA + AMP + H(+). Functionally, required for the formation of a threonylcarbamoyl group on adenosine at position 37 (t(6)A37) in tRNAs that read codons beginning with adenine. Is involved in the transfer of the threonylcarbamoyl moiety of threonylcarbamoyl-AMP (TC-AMP) to the N6 group of A37, together with TsaE and TsaB. TsaD likely plays a direct catalytic role in this reaction. The sequence is that of tRNA N6-adenosine threonylcarbamoyltransferase from Bacillus thuringiensis (strain Al Hakam).